We begin with the raw amino-acid sequence, 649 residues long: Leucine-rich repeat transmembrane protein FLRT3 (649 aa).

Residues 1-28 form the signal peptide; the sequence is MISPAWSIFLIGTKIGLFLQVAPLSVMA. Positions 29–58 constitute an LRRNT domain; the sequence is KSCPSVCRCDAGFIYCNDRFLTSIPTGIPE. Topologically, residues 29 to 528 are extracellular; it reads KSCPSVCRCD…KEPYKNPNLP (500 aa). Intrachain disulfides connect Cys31-Cys37 and Cys35-Cys44. The interaction with ADGRL3 stretch occupies residues 38–67; sequence DAGFIYCNDRFLTSIPTGIPEDATTLYLQN. LRR repeat units follow at residues 59-80, 84-104, 105-126, 129-150, 155-176, 177-197, 200-220, 226-247, 248-269, and 272-293; these read DATT…SDLK, KVER…NLPK, YVKE…SLSK, YLEE…EGAF, YLRL…LPRT, IEEL…SLQG, SLKR…GDKV, NLTE…LPGT, NLRK…AFSY, and QLYR…IFDD. An N-linked (GlcNAc...) asparagine glycan is attached at Asn226. N-linked (GlcNAc...) asparagine glycans are attached at residues Asn282 and Asn296. In terms of domain architecture, LRRCT spans 305-357; it reads NPWYCGCKMKWVRDWLQSLPVKVNVRGLMCQAPEKVRGMAIKDLNAELFDCKD. Cys309 and Cys334 are oxidised to a cystine. A disordered region spans residues 385 to 407; sequence VTKQPDIKNPKLTKDHQTTGSPS. Basic and acidic residues predominate over residues 389–401; it reads PDIKNPKLTKDHQ. One can recognise a Fibronectin type-III domain in the interval 409 to 504; it reads KTITITVKSV…VCIETETAPL (96 aa). A helical membrane pass occupies residues 529–549; it reads LAAIIGGAVALVTIALLALVC. Residues 550–649 lie on the Cytoplasmic side of the membrane; the sequence is WYVHRNGSLF…GIPDSDHSHS (100 aa). Residues 622 to 649 are disordered; that stretch reads LYKNNHSESSSNRSYRDSGIPDSDHSHS.

Monomer and homodimer. Self-associates (via leucine-rich repeats), giving rise to homooligomers. Interacts with FGFR1. Interacts (via extracellular domain) with ADGRL1/LPHN1 and LPHN2 (via olfactomedin-like domain). Interacts (via extracellular domain) with ADGRL3 (via olfactomedin-like domain); the interaction is direct. Interacts (via extracellular domain) with UNC5B and UNC5D (via extracellular domain); the interaction is direct. Identified in complexes composed of FLRT3, ADGRL3 and UNC5B, respectively FLRT3, ADGRL3 and UNC5D. May also interact (via extracellular domain) with UNC5A and UNC5C. Interacts (via cytoplasmic domain) with ROBO1. Post-translationally, N-glycosylated. Proteolytic cleavage in the juxtamembrane region gives rise to a soluble ectodomain. Cleavage is probably effected by a metalloprotease.

The protein resides in the cell membrane. It is found in the presynaptic cell membrane. The protein localises to the endoplasmic reticulum membrane. Its subcellular location is the cell junction. It localises to the focal adhesion. The protein resides in the secreted. It is found in the cell projection. The protein localises to the axon. Its subcellular location is the growth cone membrane. In terms of biological role, functions in cell-cell adhesion, cell migration and axon guidance, exerting an attractive or repulsive role depending on its interaction partners. Plays a role in the spatial organization of brain neurons. Plays a role in vascular development in the retina. Plays a role in cell-cell adhesion via its interaction with ADGRL3 and probably also other latrophilins that are expressed at the surface of adjacent cells. Interaction with the intracellular domain of ROBO1 mediates axon attraction towards cells expressing NTN1. Mediates axon growth cone collapse and plays a repulsive role in neuron guidance via its interaction with UNC5B, and possibly also other UNC-5 family members. Promotes neurite outgrowth (in vitro). Mediates cell-cell contacts that promote an increase both in neurite number and in neurite length. Plays a role in the regulation of the density of glutamaergic synapses. Plays a role in fibroblast growth factor-mediated signaling cascades. Required for normal morphogenesis during embryonic development, but not for normal embryonic patterning. Required for normal ventral closure, headfold fusion and definitive endoderm migration during embryonic development. Required for the formation of a normal basement membrane and the maintenance of a normal anterior visceral endoderm during embryonic development. The chain is Leucine-rich repeat transmembrane protein FLRT3 (FLRT3) from Pongo abelii (Sumatran orangutan).